Consider the following 471-residue polypeptide: MALQQFGLIGLAVMGENLALNIERNGFSLTVYNRTAEKTEAFMADRAQGKNIVPAYSLEDFVASLERPRRILVMVKAGGPVDAVVEQLKPLLDPGDLIIDGGNSLFTDTERRVKDLEALGLGFMGMGVSGGEEGALNGPSLMPGGTQAAYEAVEPIVRSIAAQVDDGPCVTYIGPGGSGHYVKMVHNGIEYGDMQLIAEAYDLLKSVAGLNASELHDVFAAWNKTPELDSFLIEITADIFTKVDDLGTGQPLVELILDAAGQKGTGRWTVETALEIGVAIPTIIAAVNARILSSIKAERQAASEILSGPITEPFSGDRQAFIDSVRDALYCSKICSYAQGMALLAKASQVYNYGLNLGELARIWKGGCIIRAGFLNKIKQAYDADPTLANLLLAPEFRQTILDRQLAWRRVIAIAAERGIPVPAFSASLDYFDSYRRDRLPQNLTQAQRDYFGAHTYERTDRSGSFHAQWF.

Residues 10–15 (GLAVMG), 33–35 (NRT), 75–77 (VKA), and asparagine 103 contribute to the NADP(+) site. Substrate contacts are provided by residues asparagine 103 and 129 to 131 (SGG). Lysine 183 (proton acceptor) is an active-site residue. Position 186–187 (186–187 (HN)) interacts with substrate. The active-site Proton donor is glutamate 190. 5 residues coordinate substrate: tyrosine 191, lysine 263, arginine 290, arginine 449, and histidine 455.

The protein belongs to the 6-phosphogluconate dehydrogenase family. Homodimer.

It catalyses the reaction 6-phospho-D-gluconate + NADP(+) = D-ribulose 5-phosphate + CO2 + NADPH. It functions in the pathway carbohydrate degradation; pentose phosphate pathway; D-ribulose 5-phosphate from D-glucose 6-phosphate (oxidative stage): step 3/3. Catalyzes the oxidative decarboxylation of 6-phosphogluconate to ribulose 5-phosphate and CO(2), with concomitant reduction of NADP to NADPH. This Synechococcus elongatus (strain ATCC 33912 / PCC 7942 / FACHB-805) (Anacystis nidulans R2) protein is 6-phosphogluconate dehydrogenase, decarboxylating (gnd).